Reading from the N-terminus, the 20-residue chain is Cytochrome c oxidase subunit 5A-1, mitochondrial (20 aa).

Belongs to the cytochrome c oxidase subunit 5A family. As to quaternary structure, component of the cytochrome c oxidase (complex IV, CIV), a multisubunit enzyme composed of 14 subunits. The complex is composed of a catalytic core of 3 subunits MT-CO1, MT-CO2 and MT-CO3, encoded in the mitochondrial DNA, and 11 supernumerary subunits COX4I, COX5A, COX5B, COX6A, COX6B, COX6C, COX7A, COX7B, COX7C, COX8 and NDUFA4, which are encoded in the nuclear genome. The complex exists as a monomer or a dimer and forms supercomplexes (SCs) in the inner mitochondrial membrane with NADH-ubiquinone oxidoreductase (complex I, CI) and ubiquinol-cytochrome c oxidoreductase (cytochrome b-c1 complex, complex III, CIII), resulting in different assemblies (supercomplex SCI(1)III(2)IV(1) and megacomplex MCI(2)III(2)IV(2)). Interacts with AFG1L. Interacts with RAB5IF.

The protein localises to the mitochondrion inner membrane. It participates in energy metabolism; oxidative phosphorylation. Component of the cytochrome c oxidase, the last enzyme in the mitochondrial electron transport chain which drives oxidative phosphorylation. The respiratory chain contains 3 multisubunit complexes succinate dehydrogenase (complex II, CII), ubiquinol-cytochrome c oxidoreductase (cytochrome b-c1 complex, complex III, CIII) and cytochrome c oxidase (complex IV, CIV), that cooperate to transfer electrons derived from NADH and succinate to molecular oxygen, creating an electrochemical gradient over the inner membrane that drives transmembrane transport and the ATP synthase. Cytochrome c oxidase is the component of the respiratory chain that catalyzes the reduction of oxygen to water. Electrons originating from reduced cytochrome c in the intermembrane space (IMS) are transferred via the dinuclear copper A center (CU(A)) of subunit 2 and heme A of subunit 1 to the active site in subunit 1, a binuclear center (BNC) formed by heme A3 and copper B (CU(B)). The BNC reduces molecular oxygen to 2 water molecules using 4 electrons from cytochrome c in the IMS and 4 protons from the mitochondrial matrix. The polypeptide is Cytochrome c oxidase subunit 5A-1, mitochondrial (Thunnus obesus (Bigeye tuna)).